Consider the following 336-residue polypeptide: MYYPFVRKALFQLDPERAHEFTFQQLRRITGTPLEALVRQKVPTKPVTCMGLTFKNPLGLAAGLDKDGECIDALGAMGFGSLEIGTVTPRPQPGNDKPRLFRLVDAEGLINRMGFNNLGVDNLVENVKKAHFDGILGINIGKNKDTPVENGKDDYLICMEKVYAYAGYIAINISSPNTPGLRTLQYGDALDDLLTAIKNKQNDLQAIHHKYVPVAVKIAPDLCEEELIQVADSLLRHNIDGVIATNTTLDRSLVQGMKNCQQTGGLSGRPLQLKSTEIIRRLSQELKGQLPIIGVGGIDSVIAAREKIAAGATLVQIYSGFIFKGPPLIKEIVTHI.

FMN contacts are provided by residues 62–66 (AGLDK) and Thr-86. Residue Lys-66 participates in substrate binding. Residue 111–115 (NRMGF) coordinates substrate. Positions 139 and 172 each coordinate FMN. Substrate is bound at residue Asn-172. The Nucleophile role is filled by Ser-175. Asn-177 lines the substrate pocket. FMN contacts are provided by Lys-217 and Thr-245. Residue 246-247 (NT) participates in substrate binding. Residues Gly-268, Gly-297, and 318 to 319 (YS) contribute to the FMN site.

This sequence belongs to the dihydroorotate dehydrogenase family. Type 2 subfamily. As to quaternary structure, monomer. Requires FMN as cofactor.

It localises to the cell membrane. It catalyses the reaction (S)-dihydroorotate + a quinone = orotate + a quinol. It functions in the pathway pyrimidine metabolism; UMP biosynthesis via de novo pathway; orotate from (S)-dihydroorotate (quinone route): step 1/1. Catalyzes the conversion of dihydroorotate to orotate with quinone as electron acceptor. This Salmonella agona (strain SL483) protein is Dihydroorotate dehydrogenase (quinone).